The following is a 503-amino-acid chain: D-xylose-proton symporter-like 1 (503 aa).

Residues 1-23 are disordered; that stretch reads MGFDPENQSISSVGQVVGDSSSG. A compositionally biased stretch (low complexity) spans 8-23; the sequence is QSISSVGQVVGDSSSG. 12 helical membrane-spanning segments follow: residues 51–73, 95–115, 129–149, 152–172, 190–210, 213–233, 305–325, 346–366, 374–394, 405–425, 437–457, and 467–487; these read FLFP…CAIM, IITS…FSVA, FLYL…ILII, VTYG…IAET, VLGM…ISGW, MYAT…WLPA, ALTI…PSVL, ISIL…IVID, LLCG…YYMF, ALLL…WLMI, GISL…FAFS, and ILFC…YYIV.

The protein belongs to the major facilitator superfamily. Sugar transporter (TC 2.A.1.1) family.

It is found in the membrane. This is D-xylose-proton symporter-like 1 from Arabidopsis thaliana (Mouse-ear cress).